A 284-amino-acid polypeptide reads, in one-letter code: MLSKQIPLGIYEKALPAGECWLERLQLAKKLGFDFVEMSVDETDDRLSRLDWSREQRLALVNAIVETGVRVPSMCLSAHRRFPLGSEDDAVRAQGLEIMRKAIQFAQDVGIRVIQLAGYDVYYQEANNETRRRFRDGLKESVEMASRAQVTLAMEIMDYPLMNSISKALGYAHYLNNPWFQLYPDIGNLSAWDNDVQMELQAGIGHIVAVHVKDTKPGVFKNVPFGEGVVDFERCFETLKQSGYCGPYLIEMWSETAEDPAAEVAKARDWVKARMAKAGMVEAA.

The protein belongs to the L-ribulose-5-phosphate 3-epimerase family.

It carries out the reaction L-ribulose 5-phosphate = L-xylulose 5-phosphate. The protein operates within cofactor degradation; L-ascorbate degradation; D-xylulose 5-phosphate from L-ascorbate: step 3/4. Its function is as follows. Catalyzes the isomerization of L-xylulose-5-phosphate to L-ribulose-5-phosphate. Is involved in the anaerobic L-ascorbate utilization. This is L-ribulose-5-phosphate 3-epimerase UlaE from Escherichia coli (strain SMS-3-5 / SECEC).